The sequence spans 236 residues: Class B acid phosphatase (236 aa).

Residues 1–23 (MRKLTLTLSALALALSLNSVADA) form the signal peptide. The active-site Nucleophile is aspartate 68. Residues aspartate 68 and aspartate 70 each coordinate Mg(2+). The Proton donor role is filled by aspartate 70. Residues 136–137 (TG) and lysine 176 each bind substrate. Position 191 (aspartate 191) interacts with Mg(2+).

It belongs to the class B bacterial acid phosphatase family. As to quaternary structure, homotetramer. The cofactor is Mg(2+).

The protein resides in the periplasm. The catalysed reaction is a phosphate monoester + H2O = an alcohol + phosphate. Activated by ethanol. Also activated by Co(2+), Zn(2+) and glycerol. Inhibited by EDTA, inorganic phosphate, nucleosides and Ca(2+). Unaffected by fluoride and tartrate. In terms of biological role, dephosphorylates several organic phosphate monoesters including 5'-AMP, 3'-AMP, pNPP, PDP, 5'-UMP, 3'-UMP, G2P, glucose 6-P and ribose 5-P. No activity toward organic phosphate diesters. Also has a phosphotransferase activity catalyzing the transfer of low-energy phosphate groups from organic phosphate monoesters to free hydroxyl groups of various organic compounds. The protein is Class B acid phosphatase (aphA) of Morganella morganii (Proteus morganii).